Reading from the N-terminus, the 621-residue chain is Glutamine--fructose-6-phosphate aminotransferase [isomerizing] (621 aa).

Cys2 (nucleophile; for GATase activity) is an active-site residue. Positions 2 to 223 (CGIIGYVGEG…DRELGIISIS (222 aa)) constitute a Glutamine amidotransferase type-2 domain. SIS domains follow at residues 289-436 (LHLE…HKFT) and 470-611 (LSKQ…IDKP). The active-site For Fru-6P isomerization activity is Lys616.

In terms of assembly, homodimer.

It localises to the plastid. The protein localises to the chloroplast. The enzyme catalyses D-fructose 6-phosphate + L-glutamine = D-glucosamine 6-phosphate + L-glutamate. Its function is as follows. Catalyzes the first step in hexosamine metabolism, converting fructose-6P into glucosamine-6P using glutamine as a nitrogen source. This chain is Glutamine--fructose-6-phosphate aminotransferase [isomerizing], found in Cyanidium caldarium (Red alga).